The chain runs to 331 residues: Phenylalanine--tRNA ligase alpha subunit (331 aa).

E252 lines the Mg(2+) pocket.

This sequence belongs to the class-II aminoacyl-tRNA synthetase family. Phe-tRNA synthetase alpha subunit type 1 subfamily. In terms of assembly, tetramer of two alpha and two beta subunits. Mg(2+) is required as a cofactor.

It is found in the cytoplasm. The catalysed reaction is tRNA(Phe) + L-phenylalanine + ATP = L-phenylalanyl-tRNA(Phe) + AMP + diphosphate + H(+). In Hahella chejuensis (strain KCTC 2396), this protein is Phenylalanine--tRNA ligase alpha subunit.